The chain runs to 828 residues: Beta-galactosidase 13 (828 aa).

An N-terminal signal peptide occupies residues 1–23 (MKTTMAAAATCLVALLVVVLAEA). Asn-157 carries an N-linked (GlcNAc...) asparagine glycan. Residue Glu-187 is the Proton donor of the active site. 2 N-linked (GlcNAc...) asparagine glycosylation sites follow: Asn-198 and Asn-249. The Nucleophile role is filled by Glu-259. N-linked (GlcNAc...) asparagine glycosylation is found at Asn-260, Asn-362, Asn-366, Asn-392, Asn-502, Asn-578, Asn-586, and Asn-615. The SUEL-type lectin domain occupies 746–828 (AEVGDAITLS…SGVLTVQASC (83 aa)).

The protein belongs to the glycosyl hydrolase 35 family.

Its subcellular location is the secreted. It localises to the extracellular space. The protein localises to the apoplast. The catalysed reaction is Hydrolysis of terminal non-reducing beta-D-galactose residues in beta-D-galactosides.. This is Beta-galactosidase 13 from Oryza sativa subsp. japonica (Rice).